Reading from the N-terminus, the 346-residue chain is F(420)H(2) dehydrogenase subunit H (346 aa).

The next 8 membrane-spanning stretches (helical) occupy residues 18-38, 91-111, 125-145, 170-190, 196-216, 257-277, 284-304, and 326-346; these read GIVG…AVWL, IFML…AVFI, ISVL…FMVA, PLGI…IVDI, LHWN…SLMA, ILGS…PGFI, GIIV…MVII, and LLPL…YLGA.

This sequence belongs to the complex I subunit 1 family. In terms of assembly, the FPO complex is composed of at least 13 different subunits. FpoA, FpoH, FpoJ, FpoK, FpoL, FpoM and FpoN proteins constitute the membrane sector of the complex.

It localises to the cell membrane. The catalysed reaction is methanophenazine + reduced coenzyme F420-(gamma-L-Glu)(n) = dihydromethanophenazine + oxidized coenzyme F420-(gamma-L-Glu)(n) + H(+). In terms of biological role, component of the F(420)H(2) dehydrogenase (FPO complex) which is part of the energy-conserving F(420)H(2):heterodisulfide oxidoreductase system. The membrane-bound electron transfer system of the complex plays an important role in the metabolism of methylotrophic methanogens when the organisms grow on methanol or methylamines. Catalyzes the oxidation of methanophenazine to dihydromethanophenazine. It shuttles electrons from F(420)H(2), via FAD and iron-sulfur (Fe-S) centers, to methanophenazine (an electron carrier in the membrane). It couples the redox reaction to proton translocation (for every two electrons transferred, two hydrogen ions are translocated across the cytoplasmic membrane), and thus conserves the redox energy in a proton gradient. The polypeptide is F(420)H(2) dehydrogenase subunit H (Methanosarcina barkeri (strain Fusaro / DSM 804)).